The sequence spans 572 residues: Capsid vertex component 2 (572 aa).

The tract at residues 1-58 is interaction with major capsid protein/MCP; the sequence is MFRPRFEPMNLPKDSNKPSTLMVLADRLNFISCAEGSSKYASKLFEGTLIDAEIMTNR.

It belongs to the herpesviridae CVC2 protein family. As to quaternary structure, heterodimerizes with CVC1. Interacts with major capsid protein/MCP and triplex capsid protein 1/TRX1 at the pentamer vertices. Interacts with the large tegument protein/LTP.

Its subcellular location is the virion. It is found in the host nucleus. Capsid vertex-specific component that plays a role during viral DNA encapsidation, assuring correct genome cleavage and presumably stabilizing capsids that contain full-length viral genomes. Participates in the interaction between the capsid and the tegument through interaction with the large tegument protein/LTP. In Infectious laryngotracheitis virus (strain Thorne V882) (ILTV), this protein is Capsid vertex component 2.